A 773-amino-acid polypeptide reads, in one-letter code: Acyl-homoserine lactone acylase PvdQ (773 aa).

An N-terminal signal peptide occupies residues methionine 1 to alanine 23. The propeptide at serine 200–glycine 221 is spacer peptide. Serine 222 acts as the Nucleophile in catalysis.

This sequence belongs to the peptidase S45 family. As to quaternary structure, heterodimer of an alpha subunit and a beta subunit processed from the same precursor.

It localises to the periplasm. The enzyme catalyses an N-acyl-L-homoserine lactone + H2O = L-homoserine lactone + a carboxylate. Catalyzes the deacylation of acyl-homoserine lactone (AHL or acyl-HSL), releasing homoserine lactone (HSL) and the corresponding fatty acid. Possesses a specificity for the degradation of long-chain acyl-HSLs (side chains of 11 to 14 carbons in length). This is Acyl-homoserine lactone acylase PvdQ (pvdQ) from Pseudomonas syringae pv. tomato (strain ATCC BAA-871 / DC3000).